We begin with the raw amino-acid sequence, 825 residues long: Heterogeneous nuclear ribonucleoprotein U (825 aa).

At Ser2 the chain carries N-acetylserine; partial. Ser4 bears the Phosphoserine mark. Positions 8–42 (VKKLKVSELKEELKKRRLSDKGLKAELMERLQAAL) constitute an SAP domain. N6-acetyllysine occurs at positions 17 and 21. The tract at residues 41–281 (ALDDEEAGGR…PQPPVEEEDE (241 aa)) is disordered. At Ser59 the chain carries Phosphoserine; by PLK1. Ser66 is modified (phosphoserine). A compositionally biased stretch (low complexity) spans 72-81 (AGLEQEAAAG). 3 stretches are compositionally biased toward acidic residues: residues 82 to 95 (GDEE…EEEG), 120 to 134 (PMEE…ENGD), and 140 to 153 (EGED…EGAG). Over residues 159 to 178 (GEQQPQPPATQQQQPQQQRG) the composition is skewed to low complexity. An N6-acetyllysine modification is found at Lys186. An ADP-ribosylserine modification is found at Ser187. Positions 199 to 211 (APPGARQGQQQAG) are enriched in low complexity. N6-acetyllysine is present on Lys215. Over residues 233-266 (GKTEQKGGDKKRGVKRPREDHGRGYFEYIEENKY) the composition is skewed to basic and acidic residues. Arg255 bears the Citrulline mark. Lys265 carries the N6-acetyllysine; alternate modification. Lys265 participates in a covalent cross-link: Glycyl lysine isopeptide (Lys-Gly) (interchain with G-Cter in SUMO1); alternate. Lys265 participates in a covalent cross-link: Glycyl lysine isopeptide (Lys-Gly) (interchain with G-Cter in SUMO2); alternate. A Phosphotyrosine modification is found at Tyr266. Phosphoserine occurs at positions 267 and 271. The 198-residue stretch at 267–464 (SRAKSPQPPV…VEFNFGQKEK (198 aa)) folds into the B30.2/SPRY domain. Thr286 is modified (phosphothreonine). Lys352 bears the N6-acetyllysine mark. The interval 488-672 (PKGPEEKKDC…QKLLEQYKEE (185 aa)) is ATPase domain. Residue Lys495 forms a Glycyl lysine isopeptide (Lys-Gly) (interchain with G-Cter in SUMO2) linkage. 504–511 (GLPGAGKT) serves as a coordination point for ATP. An N6-acetyllysine; alternate mark is found at Lys516 and Lys524. Glycyl lysine isopeptide (Lys-Gly) (interchain with G-Cter in SUMO2); alternate cross-links involve residues Lys516 and Lys524. Thr532 carries the phosphothreonine modification. A Glycyl lysine isopeptide (Lys-Gly) (interchain with G-Cter in SUMO2) cross-link involves residue Lys536. At Lys551 the chain carries N6-acetyllysine. Lys565 is subject to N6-acetyllysine; alternate. A Glycyl lysine isopeptide (Lys-Gly) (interchain with G-Cter in SUMO2); alternate cross-link involves residue Lys565. Lys574 is covalently cross-linked (Glycyl lysine isopeptide (Lys-Gly) (interchain with G-Cter in SUMO2)). Thr582 is modified (phosphothreonine). Glycyl lysine isopeptide (Lys-Gly) (interchain with G-Cter in SUMO2) cross-links involve residues Lys609 and Lys626. An actin-binding region spans residues 611 to 626 (EDYKQRTQKKAEVEGK). Residue Lys635 is modified to N6-acetyllysine; alternate. Lys635 is covalently cross-linked (Glycyl lysine isopeptide (Lys-Gly) (interchain with G-Cter in SUMO2); alternate). Residues Lys664 and Lys670 each participate in a glycyl lysine isopeptide (Lys-Gly) (interchain with G-Cter in SUMO2) cross-link. The segment covering 671–683 (EESKKALPPEKKQ) has biased composition (basic and acidic residues). The segment at 671–749 (EESKKALPPE…GGGGGGSGGI (79 aa)) is disordered. Arg702 is subject to Omega-N-methylarginine. The segment covering 710–728 (GGFNMRGGNFRGGAPGNRG) has biased composition (gly residues). The segment at 714–739 (MRGGNFRGGAPGNRGGYNRRGNMPQR) is RNA-binding RGG-box. Residues Arg715, Arg720, and Arg727 each carry the asymmetric dimethylarginine modification. 2 positions are modified to asymmetric dimethylarginine; alternate: Arg733 and Arg739. An omega-N-methylarginine; alternate mark is found at Arg733 and Arg739. Residue Arg739 is modified to Dimethylated arginine; in A2780 ovarian carcinoma cell line. The segment covering 739–749 (RGGGGGGSGGI) has biased composition (gly residues). Asymmetric dimethylarginine is present on residues Arg755 and Arg762. The disordered stretch occupies residues 769-799 (GNYNRGGMPNRGNYNQNFRGRGNNRGYKNQS). Over residues 778–799 (NRGNYNQNFRGRGNNRGYKNQS) the composition is skewed to low complexity. Position 814 is an N6-acetyllysine; alternate (Lys814). Residue Lys814 forms a Glycyl lysine isopeptide (Lys-Gly) (interchain with G-Cter in SUMO2); alternate linkage.

As to quaternary structure, oligomer (via ATPase domain and RNA-binding RGG-box region); oligomerization occurs upon ATP-binding in a chromatin-associated RNAs (caRNAs)- and transcription-dependent manner and is required for chromatin decompaction. ATP hydrolysis is required to cycle from an oligomeric to monomeric state to compact chromatin. Component of the coding region determinant (CRD)-mediated complex, composed of DHX9, HNRNPU, IGF2BP1, SYNCRIP and YBX1. Identified in the spliceosome C complex. Identified in a IGF2BP1-dependent mRNP granule complex containing untranslated mRNAs. Associates with heterogeneous nuclear ribonucleoprotein (hnRNP) particles. Associates (via middle region) with the C-terminal domain (CTD) RNA polymerase II (Pol II) holoenzyme; this association occurs in a RNA-independent manner. Associates (via middle region) with the core-TFIIH basal transcription factor complex; this association inhibits the CTD phosphorylation of RNA polymerase II holoenzyme by down-regulating TFIIH kinase activity. Associates with the telomerase holoenzyme complex. Associates with spindle microtubules (MTs) in a TPX2-dependent manner. Interacts (via C-terminus) with actin; this interaction is direct and mediates association with the phosphorylated CTD of RNA polymerase II and is disrupted in presence of the long non-coding H19 RNA. Interacts with AURKA. Interacts (via C-terminus) with CBX5; this interaction is, at least in part, RNA-dependent. Interacts with CR2. Interacts with CRY1. Interacts (via C-terminus) with EP300; this interaction enhances DNA-binding to nuclear scaffold/matrix attachment region (S/MAR) elements. Interacts with ERBB4. Interacts with GEMIN5. Interacts with IGF2BP1. Interacts with IGF2BP2 and IGF2BP3. Interacts with NCL; this interaction occurs during mitosis. Interacts (via C-terminus) with NR3C1 (via C-terminus). Interacts with PLK1; this interaction induces phosphorylation of HNRNPU at Ser-59 in mitosis. Interacts with POU3F4. Interacts with SMARCA4; this interaction occurs in embryonic stem cells and stimulates global Pol II-mediated transcription. Interacts (via C-terminus) with TOP2A; this interaction protects the topoisomerase TOP2A from degradation and positively regulates the relaxation of supercoiled DNA by TOP2A in a RNA-dependent manner. Interacts with TPX2; this interaction recruits HNRNPU to spindle microtubules (MTs). Interacts with UBQLN2. Interacts (via RNA-binding RGG-box region) with ZBTB7B; the interaction facilitates the recruitment of long non-coding RNA Blnc1 by ZBTB7B. Interacts with ERCC6. In terms of assembly, (Microbial infection) Interacts with HIV-1 protein Rev. Post-translationally, cleaved at Asp-100 by CASP3 during T-cell apoptosis, resulting in a loss of DNA- and chromatin-binding activities. In terms of processing, extensively phosphorylated. Phosphorylated on Ser-59 by PLK1 and dephosphorylated by protein phosphatase 2A (PP2A) in mitosis. Arg-739 is dimethylated, probably to asymmetric dimethylarginine. Arg-733 is dimethylated, probably to asymmetric dimethylarginine. Post-translationally, citrullinated by PADI4. In terms of tissue distribution, widely expressed.

It localises to the nucleus. The protein resides in the nucleus matrix. It is found in the chromosome. The protein localises to the nucleus speckle. Its subcellular location is the cytoplasm. It localises to the cytoskeleton. The protein resides in the microtubule organizing center. It is found in the centrosome. The protein localises to the centromere. Its subcellular location is the kinetochore. It localises to the spindle. The protein resides in the spindle pole. It is found in the midbody. The protein localises to the cell surface. Its subcellular location is the cytoplasmic granule. Functionally, DNA- and RNA-binding protein involved in several cellular processes such as nuclear chromatin organization, telomere-length regulation, transcription, mRNA alternative splicing and stability, Xist-mediated transcriptional silencing and mitotic cell progression. Plays a role in the regulation of interphase large-scale gene-rich chromatin organization through chromatin-associated RNAs (caRNAs) in a transcription-dependent manner, and thereby maintains genomic stability. Required for the localization of the long non-coding Xist RNA on the inactive chromosome X (Xi) and the subsequent initiation and maintenance of X-linked transcriptional gene silencing during X-inactivation. Plays a role as a RNA polymerase II (Pol II) holoenzyme transcription regulator. Promotes transcription initiation by direct association with the core-TFIIH basal transcription factor complex for the assembly of a functional pre-initiation complex with Pol II in a actin-dependent manner. Blocks Pol II transcription elongation activity by inhibiting the C-terminal domain (CTD) phosphorylation of Pol II and dissociates from Pol II pre-initiation complex prior to productive transcription elongation. Positively regulates CBX5-induced transcriptional gene silencing and retention of CBX5 in the nucleus. Negatively regulates glucocorticoid-mediated transcriptional activation. Key regulator of transcription initiation and elongation in embryonic stem cells upon leukemia inhibitory factor (LIF) signaling. Involved in the long non-coding RNA H19-mediated Pol II transcriptional repression. Participates in the circadian regulation of the core clock component BMAL1 transcription. Plays a role in the regulation of telomere length. Plays a role as a global pre-mRNA alternative splicing modulator by regulating U2 small nuclear ribonucleoprotein (snRNP) biogenesis. Plays a role in mRNA stability. Component of the CRD-mediated complex that promotes MYC mRNA stabilization. Enhances the expression of specific genes, such as tumor necrosis factor TNFA, by regulating mRNA stability, possibly through binding to the 3'-untranslated region (UTR). Plays a role in mitotic cell cycle regulation. Involved in the formation of stable mitotic spindle microtubules (MTs) attachment to kinetochore, spindle organization and chromosome congression. Phosphorylation at Ser-59 by PLK1 is required for chromosome alignement and segregation and progression through mitosis. Also contributes to the targeting of AURKA to mitotic spindle MTs. Binds to double- and single-stranded DNA and RNA, poly(A), poly(C) and poly(G) oligoribonucleotides. Binds to chromatin-associated RNAs (caRNAs). Associates with chromatin to scaffold/matrix attachment region (S/MAR) elements in a chromatin-associated RNAs (caRNAs)-dependent manner. Binds to the Xist RNA. Binds the long non-coding H19 RNA. Binds to SMN1/2 pre-mRNAs at G/U-rich regions. Binds to small nuclear RNAs (snRNAs). Binds to the 3'-UTR of TNFA mRNA. Binds (via RNA-binding RGG-box region) to the long non-coding Xist RNA; this binding is direct and bridges the Xist RNA and the inactive chromosome X (Xi). Also negatively regulates embryonic stem cell differentiation upon LIF signaling. Required for embryonic development. Binds to brown fat long non-coding RNA 1 (Blnc1); facilitates the recruitment of Blnc1 by ZBTB7B required to drive brown and beige fat development and thermogenesis. In terms of biological role, (Microbial infection) Negatively regulates immunodeficiency virus type 1 (HIV-1) replication by preventing the accumulation of viral mRNA transcripts in the cytoplasm. In Homo sapiens (Human), this protein is Heterogeneous nuclear ribonucleoprotein U.